Consider the following 77-residue polypeptide: Serine protease inhibitor 1 (77 aa).

The signal sequence occupies residues 1–17; the sequence is MMFTPLIVLTLLVLATA. 5 cysteine pairs are disulfide-bonded: cysteine 21–cysteine 53, cysteine 30–cysteine 48, cysteine 33–cysteine 44, cysteine 37–cysteine 74, and cysteine 55–cysteine 68. The TIL domain occupies 21–74; that stretch reads CGPNEQWSDCPGCELQCGESDKPCPAMCGDPKCYCSPDQYRRIPDGRCIRKIQC.

The protein localises to the secreted. In terms of biological role, defends the organism against the host's proteinases. The polypeptide is Serine protease inhibitor 1 (Anisakis simplex (Herring worm)).